The sequence spans 29 residues: Cyclotide psyleio D (29 aa).

The cyclopeptide (Gly-Asp) cross-link spans 1–29; that stretch reads GLPVCGESCFGGTCNTPGCSCTWPVCTRD. Disulfide bonds link C5–C19, C9–C21, and C14–C26.

Post-translationally, this is a cyclic peptide.

In terms of biological role, probably participates in a plant defense mechanism. The polypeptide is Cyclotide psyleio D (Psychotria brachyceras).